The chain runs to 156 residues: 6,7-dimethyl-8-ribityllumazine synthase (156 aa).

5-amino-6-(D-ribitylamino)uracil-binding positions include F23, A57–E59, and T81–I83. S86–T87 is a binding site for (2S)-2-hydroxy-3-oxobutyl phosphate. H89 functions as the Proton donor in the catalytic mechanism. F114 serves as a coordination point for 5-amino-6-(D-ribitylamino)uracil. Residue R128 coordinates (2S)-2-hydroxy-3-oxobutyl phosphate.

It belongs to the DMRL synthase family. As to quaternary structure, forms an icosahedral capsid composed of 60 subunits, arranged as a dodecamer of pentamers.

The catalysed reaction is (2S)-2-hydroxy-3-oxobutyl phosphate + 5-amino-6-(D-ribitylamino)uracil = 6,7-dimethyl-8-(1-D-ribityl)lumazine + phosphate + 2 H2O + H(+). The protein operates within cofactor biosynthesis; riboflavin biosynthesis; riboflavin from 2-hydroxy-3-oxobutyl phosphate and 5-amino-6-(D-ribitylamino)uracil: step 1/2. Its function is as follows. Catalyzes the formation of 6,7-dimethyl-8-ribityllumazine by condensation of 5-amino-6-(D-ribitylamino)uracil with 3,4-dihydroxy-2-butanone 4-phosphate. This is the penultimate step in the biosynthesis of riboflavin. The chain is 6,7-dimethyl-8-ribityllumazine synthase from Halalkalibacterium halodurans (strain ATCC BAA-125 / DSM 18197 / FERM 7344 / JCM 9153 / C-125) (Bacillus halodurans).